The primary structure comprises 506 residues: GTPase Der (506 aa).

EngA-type G domains follow at residues 3–166 and 218–391; these read PVVA…GEQL and IKIA…ACAT. GTP contacts are provided by residues 9–16, 56–60, 118–121, 224–231, 271–275, and 336–339; these read GRPNVGKS, DTGGI, NKTD, DTAGV, and NKWD. Positions 392 to 476 constitute a KH-like domain; that stretch reads QKTSTSMLTR…PIRIQFQEGN (85 aa).

It belongs to the TRAFAC class TrmE-Era-EngA-EngB-Septin-like GTPase superfamily. EngA (Der) GTPase family. As to quaternary structure, associates with the 50S ribosomal subunit.

Its function is as follows. GTPase that plays an essential role in the late steps of ribosome biogenesis. In Actinobacillus pleuropneumoniae serotype 3 (strain JL03), this protein is GTPase Der.